Here is a 33-residue protein sequence, read N- to C-terminus: Neutrophil defensin 1 (33 aa).

3 cysteine pairs are disulfide-bonded: Cys-3/Cys-31, Cys-5/Cys-20, and Cys-10/Cys-30.

The protein belongs to the alpha-defensin family.

It is found in the secreted. In terms of biological role, anti-fungal and bactericidal activity, greater against Gram-positive bacteria. In Mesocricetus auratus (Golden hamster), this protein is Neutrophil defensin 1.